Here is a 611-residue protein sequence, read N- to C-terminus: Glutamine--fructose-6-phosphate aminotransferase [isomerizing] (611 aa).

Cysteine 2 serves as the catalytic Nucleophile; for GATase activity. Residues 2-219 (CGIVGAVAER…EGDIAEIRRD (218 aa)) enclose the Glutamine amidotransferase type-2 domain. 2 consecutive SIS domains span residues 287-427 (AADL…VRGT) and 460-601 (IAEL…VDQP). Residue lysine 606 is the For Fru-6P isomerization activity of the active site.

Homodimer.

The protein resides in the cytoplasm. It carries out the reaction D-fructose 6-phosphate + L-glutamine = D-glucosamine 6-phosphate + L-glutamate. Catalyzes the first step in hexosamine metabolism, converting fructose-6P into glucosamine-6P using glutamine as a nitrogen source. This is Glutamine--fructose-6-phosphate aminotransferase [isomerizing] from Pseudomonas putida (strain ATCC 47054 / DSM 6125 / CFBP 8728 / NCIMB 11950 / KT2440).